Consider the following 365-residue polypeptide: Putative ankyrin repeat protein R903 (365 aa).

10 ANK repeats span residues 38-67, 68-97, 99-127, 129-158, 184-213, 214-243, 245-273, 275-298, 299-328, and 330-361; these read NINSFFMIFVEQGNLSWVKILHSQGYDIRF, QNNEALKIACKYGYLEIVKYLYDHGCDIFI, NNFCLKIASERGHLEIVKYLYQNGYKFSN, SKPILDIAAANGHFEIIKYVRLLNPNNINK, KFKDNIYRATEYGNIEIIKKTWNKFCGNIT, VSNNLFKIAVVYGHLNIIKYMFKKGHRFPR, SNELIQIACGKGYLDIVKYLHKKGFSIVD, LLNIAGRFGHHDVVEYLYKRLKNV, NLQKVITITIENDYLEIVKFFVTKENNPDE, and RTYLILAHKHGHNRIIRYFDSLLIMTQQKLQS.

The sequence is that of Putative ankyrin repeat protein R903 from Acanthamoeba polyphaga mimivirus (APMV).